A 403-amino-acid chain; its full sequence is Tyrosine--tRNA ligase (403 aa).

The short motif at 42 to 51 is the 'HIGH' region element; it reads PTAPDLHLGH. A 'KMSKS' region motif is present at residues 226 to 230; the sequence is KMSKS. Lys229 lines the ATP pocket. The S4 RNA-binding domain occupies 336 to 396; the sequence is MPISAVLNKA…GKKAFGRVTL (61 aa).

It belongs to the class-I aminoacyl-tRNA synthetase family. TyrS type 2 subfamily. In terms of assembly, homodimer.

The protein localises to the cytoplasm. The catalysed reaction is tRNA(Tyr) + L-tyrosine + ATP = L-tyrosyl-tRNA(Tyr) + AMP + diphosphate + H(+). Functionally, catalyzes the attachment of tyrosine to tRNA(Tyr) in a two-step reaction: tyrosine is first activated by ATP to form Tyr-AMP and then transferred to the acceptor end of tRNA(Tyr). The chain is Tyrosine--tRNA ligase from Pseudomonas savastanoi pv. phaseolicola (strain 1448A / Race 6) (Pseudomonas syringae pv. phaseolicola (strain 1448A / Race 6)).